Consider the following 458-residue polypeptide: Phosphoglucosamine mutase (458 aa).

The active-site Phosphoserine intermediate is S106. Mg(2+) contacts are provided by S106, D247, D249, and D251. S106 is subject to Phosphoserine.

This sequence belongs to the phosphohexose mutase family. Requires Mg(2+) as cofactor. Post-translationally, activated by phosphorylation.

The catalysed reaction is alpha-D-glucosamine 1-phosphate = D-glucosamine 6-phosphate. Functionally, catalyzes the conversion of glucosamine-6-phosphate to glucosamine-1-phosphate. The polypeptide is Phosphoglucosamine mutase (Chlamydia abortus (strain DSM 27085 / S26/3) (Chlamydophila abortus)).